Consider the following 432-residue polypeptide: 3-phosphoshikimate 1-carboxyvinyltransferase (432 aa).

K23, S24, and R28 together coordinate 3-phosphoshikimate. K23 lines the phosphoenolpyruvate pocket. Residues G95 and R123 each contribute to the phosphoenolpyruvate site. The 3-phosphoshikimate site is built by S167, Q169, D317, and K344. Q169 contributes to the phosphoenolpyruvate binding site. D317 serves as the catalytic Proton acceptor. Residues R348 and R390 each contribute to the phosphoenolpyruvate site.

The protein belongs to the EPSP synthase family. Monomer.

The protein localises to the cytoplasm. The catalysed reaction is 3-phosphoshikimate + phosphoenolpyruvate = 5-O-(1-carboxyvinyl)-3-phosphoshikimate + phosphate. Its pathway is metabolic intermediate biosynthesis; chorismate biosynthesis; chorismate from D-erythrose 4-phosphate and phosphoenolpyruvate: step 6/7. Functionally, catalyzes the transfer of the enolpyruvyl moiety of phosphoenolpyruvate (PEP) to the 5-hydroxyl of shikimate-3-phosphate (S3P) to produce enolpyruvyl shikimate-3-phosphate and inorganic phosphate. This chain is 3-phosphoshikimate 1-carboxyvinyltransferase, found in Staphylococcus aureus (strain COL).